The primary structure comprises 274 residues: 2,3,4,5-tetrahydropyridine-2,6-dicarboxylate N-succinyltransferase (274 aa).

Substrate-binding residues include R104 and D141.

This sequence belongs to the transferase hexapeptide repeat family. In terms of assembly, homotrimer.

The protein resides in the cytoplasm. The enzyme catalyses (S)-2,3,4,5-tetrahydrodipicolinate + succinyl-CoA + H2O = (S)-2-succinylamino-6-oxoheptanedioate + CoA. It participates in amino-acid biosynthesis; L-lysine biosynthesis via DAP pathway; LL-2,6-diaminopimelate from (S)-tetrahydrodipicolinate (succinylase route): step 1/3. This is 2,3,4,5-tetrahydropyridine-2,6-dicarboxylate N-succinyltransferase from Enterobacter sp. (strain 638).